Reading from the N-terminus, the 852-residue chain is DNA repair protein rhp54 (852 aa).

Short sequence motifs (nuclear localization signal) lie at residues 35 to 51 and 178 to 181; these read KKFK…RKEL and KRKK. Residues 187–205 show a composition bias toward basic and acidic residues; that stretch reads NRKGKKEISDSEPESDHDS. The segment at 187–208 is disordered; that stretch reads NRKGKKEISDSEPESDHDSCVS. Positions 281–459 constitute a Helicase ATP-binding domain; that stretch reads GRIDRCANGC…FSLLNFANPG (179 aa). ATP is bound at residue 294–301; that stretch reads DEMGLGKT. A DEGH box motif is present at residues 410–413; it reads DEGH. Residues 614–767 enclose the Helicase C-terminal domain; sequence VLERMLYQIK…CVVDEAQDVE (154 aa).

Belongs to the SNF2/RAD54 helicase family. As to quaternary structure, homohexamer. Interacts with rhp51.

The protein resides in the nucleus. It carries out the reaction ATP + H2O = ADP + phosphate + H(+). Plays an essential role in homologous recombination (HR) which is a major pathway for repairing DNA double-strand breaks (DSBs), single-stranded DNA (ssDNA) gaps, and stalled or collapsed replication forks. Acts as a molecular motor during the homology search and guides RAD51 ssDNA along a donor dsDNA thereby changing the homology search from the diffusion-based mechanism to a motor-guided mechanism. Plays also an essential role in RAD51-mediated synaptic complex formation which consists of three strands encased in a protein filament formed once homology is recognized. Once DNA strand exchange occured, dissociates RAD51 from nucleoprotein filaments formed on dsDNA. The sequence is that of DNA repair protein rhp54 (rhp54) from Schizosaccharomyces pombe (strain 972 / ATCC 24843) (Fission yeast).